The following is a 252-amino-acid chain: MSDWNPSLYLHFSAERSRPAVELLARVPLENVEYVADLGCGPGNSTALLHQRWPAARITGIDSSPAMIAEARSALPDCQFVEADIRNWQPEQALDLIFANASLQWLPDHYELFPHLVSLLNPQGVLAVQMPDNWLEPTHVLMREVAWEQNYPDRGREPLAGVHAYYDILSEAGCEVDIWRTTYYHQMPSHQAIIDWVTATGLRPWLQDLTESEQQLFLTRYHQMLEEQYPLQENGQILLAFPRLFIVARRTE.

The protein belongs to the methyltransferase superfamily. Tam family.

It localises to the cytoplasm. It carries out the reaction trans-aconitate + S-adenosyl-L-methionine = (E)-3-(methoxycarbonyl)pent-2-enedioate + S-adenosyl-L-homocysteine. In terms of biological role, catalyzes the S-adenosylmethionine monomethyl esterification of trans-aconitate. This Shigella flexneri protein is Trans-aconitate 2-methyltransferase.